The sequence spans 226 residues: UPF0758 protein PputW619_0186 (226 aa).

Residues 102–224 (ALESPSAVRR…PLSMVEQGWI (123 aa)) enclose the MPN domain. Residues His173, His175, and Asp186 each contribute to the Zn(2+) site. The JAMM motif motif lies at 173–186 (HNHPSGNSEPSQDD).

It belongs to the UPF0758 family.

The sequence is that of UPF0758 protein PputW619_0186 from Pseudomonas putida (strain W619).